The primary structure comprises 543 residues: Probable protein kinase UbiB (543 aa).

The 379-residue stretch at 123-501 (DFDIVPLASA…KRQQAKGQFL (379 aa)) folds into the Protein kinase domain. Residues 129 to 137 (LASASIAQV) and Lys-152 contribute to the ATP site. Asp-287 serves as the catalytic Proton acceptor. Residues 517–539 (TSNITALASISAATGVTFWLLSW) traverse the membrane as a helical segment.

This sequence belongs to the ABC1 family. UbiB subfamily.

The protein resides in the cell inner membrane. It participates in cofactor biosynthesis; ubiquinone biosynthesis [regulation]. Its function is as follows. Is probably a protein kinase regulator of UbiI activity which is involved in aerobic coenzyme Q (ubiquinone) biosynthesis. The sequence is that of Probable protein kinase UbiB from Aliivibrio salmonicida (strain LFI1238) (Vibrio salmonicida (strain LFI1238)).